The chain runs to 611 residues: MSKIIGIDLGTTNSCVAVMEGGEATVIPNPEGNRTTPSVVAFKDGERLVGEVAKRQAITNPNTVISIKRHMGTDYKVDIEGKSYSPQEISAIILQKLKADAEAYLGEKVTKAVITVPAYFNDSQRQATKDAGKIAGLEVDRIVNEPTAAALAYGLEKEDDQTILVYDLGGGTFDVSILELGDGFFEVKATSGDNKLGGDDFDEVIMDHLVAEFKKENGIDLSQDKMAMQRLKDAAEKAKKDLSGVTQTQISLPFITADATGPKHLELTLTRAKFDELSADLVERTLGPTRRALSDAGLSASDIDKVVLVGGSTRIPAVQEAIKKLTGKDPHKGVNPDEVVALGAAVQAGVLTGDVKDVVLLDVTPLSLGIETMGGVFTKLIERNTTIPTSKSQVFSTAADNQPSVDIHVLQGEREMAADNKTLGRFQLTDIPPAPRGVPQIEVTFDIDANGIVNVKAKDLGTNKEQSITITSSSGLSEEEIDKMVQEAEANAEADKKRREQVELRNEADQLVFSTEKTLKDLGDNVDQAEKDKAEAAKDKLKKALEADNTDDIKAAKDELQEIVTALTTKLYEQAAQAAQAQQDGGNESADKQDDNVVDADYEEVNDDDKK.

T172 carries the phosphothreonine; by autocatalysis modification. A disordered region spans residues 575-611; it reads AAQAAQAQQDGGNESADKQDDNVVDADYEEVNDDDKK. Over residues 596–611 the composition is skewed to acidic residues; it reads NVVDADYEEVNDDDKK.

Belongs to the heat shock protein 70 family.

Acts as a chaperone. This Shouchella clausii (strain KSM-K16) (Alkalihalobacillus clausii) protein is Chaperone protein DnaK.